The primary structure comprises 521 residues: RING-type E3 ubiquitin-protein ligase PPIL2 (521 aa).

Positions 35–108 (RRLPFDHCSL…GQYHCPVLYS (74 aa)) constitute a U-box domain. Residues 197–217 (LKNTNSETRETLQELYKEFKG) adopt a coiled-coil conformation. K216 participates in a covalent cross-link: Glycyl lysine isopeptide (Lys-Gly) (interchain with G-Cter in SUMO2). The region spanning 278-433 (KKGYVRLHTN…EEVLICTTTV (156 aa)) is the PPIase cyclophilin-type domain. Residues 447 to 462 (QERKKTQHQVDPEAKV) are compositionally biased toward basic and acidic residues. The segment at 447–521 (QERKKTQHQV…SRGFGDFSSW (75 aa)) is disordered. The span at 465–478 (SQPQPGNQGPQTYR) shows a compositional bias: polar residues. K483 is subject to N6-acetyllysine.

Belongs to the cyclophilin-type PPIase family. PPIL2 subfamily. In terms of assembly, component of the minor spliceosome, which splices U12-type introns. Within this complex, interacts with PRPF8/PRP8, EFTUD2/SNU114 and PLRG1. Interacts with isoform 2 of BSG. Interacts (via the PPIase cyclophilin-type domain) with CRNKL1; they may form a trimeric complex with HSP90.

Its subcellular location is the nucleus. The enzyme catalyses S-ubiquitinyl-[E2 ubiquitin-conjugating enzyme]-L-cysteine + [acceptor protein]-L-lysine = [E2 ubiquitin-conjugating enzyme]-L-cysteine + N(6)-ubiquitinyl-[acceptor protein]-L-lysine.. Its pathway is protein modification; protein ubiquitination. In terms of biological role, has a ubiquitin-protein ligase activity acting as an E3 ubiquitin protein ligase or as an ubiquitin-ubiquitin ligase promoting elongation of ubiquitin chains on substrates. By mediating 'Lys-48'-linked polyubiquitination of proteins could target them for proteasomal degradation. May also function as a chaperone, playing a role in transport to the cell membrane of BSG/Basigin for instance. Probable inactive PPIase with no peptidyl-prolyl cis-trans isomerase activity. As a component of the minor spliceosome, involved in the splicing of U12-type introns in pre-mRNAs. This chain is RING-type E3 ubiquitin-protein ligase PPIL2, found in Mus musculus (Mouse).